The primary structure comprises 335 residues: Trans-3-hydroxy-L-proline dehydratase (335 aa).

Cysteine 91 (proton acceptor) is an active-site residue. Substrate is bound by residues 92 to 93 (GH) and 256 to 257 (GS).

The protein belongs to the proline racemase family. As to quaternary structure, homodimer.

It catalyses the reaction trans-3-hydroxy-L-proline = 1-pyrroline-2-carboxylate + H2O. Its pathway is amino-acid degradation. Its function is as follows. Catalyzes the dehydration of trans-3-hydroxy-L-proline (t3LHyp) to Delta(1)-pyrroline-2-carboxylate (Pyr2C). Together with LhpI, is involved in a t3LHyp degradation pathway to L-proline, which allows A.brasilense to grow on t3LHyp as a sole carbon source. This Azospirillum brasilense protein is Trans-3-hydroxy-L-proline dehydratase.